The chain runs to 234 residues: Ubiquitin carboxyl-terminal hydrolase 3 (234 aa).

In terms of domain architecture, UCH catalytic spans Arg-12–Lys-232. The Nucleophile role is filled by Cys-101. Residue His-172 is the Proton donor of the active site.

The protein belongs to the peptidase C12 family.

It carries out the reaction Thiol-dependent hydrolysis of ester, thioester, amide, peptide and isopeptide bonds formed by the C-terminal Gly of ubiquitin (a 76-residue protein attached to proteins as an intracellular targeting signal).. The chain is Ubiquitin carboxyl-terminal hydrolase 3 from Arabidopsis thaliana (Mouse-ear cress).